We begin with the raw amino-acid sequence, 262 residues long: Tryptophan synthase alpha chain (262 aa).

Catalysis depends on proton acceptor residues Glu-48 and Asp-59.

Belongs to the TrpA family. As to quaternary structure, tetramer of two alpha and two beta chains.

The catalysed reaction is (1S,2R)-1-C-(indol-3-yl)glycerol 3-phosphate + L-serine = D-glyceraldehyde 3-phosphate + L-tryptophan + H2O. Its pathway is amino-acid biosynthesis; L-tryptophan biosynthesis; L-tryptophan from chorismate: step 5/5. The alpha subunit is responsible for the aldol cleavage of indoleglycerol phosphate to indole and glyceraldehyde 3-phosphate. This is Tryptophan synthase alpha chain from Helicobacter pylori (strain J99 / ATCC 700824) (Campylobacter pylori J99).